The primary structure comprises 119 residues: NADH dehydrogenase [ubiquinone] 1 subunit C2 (119 aa).

Residues 56-75 traverse the membrane as a helical segment; that stretch reads GLHRQLLYITAFFFAGYYLV.

This sequence belongs to the complex I NDUFC2 subunit family. Complex I is composed of 45 different subunits. Interacts with TMEM242.

It localises to the mitochondrion inner membrane. Accessory subunit of the mitochondrial membrane respiratory chain NADH dehydrogenase (Complex I), that is believed not to be involved in catalysis but required for the complex assembly. Complex I functions in the transfer of electrons from NADH to the respiratory chain. The immediate electron acceptor for the enzyme is believed to be ubiquinone. In Gorilla gorilla gorilla (Western lowland gorilla), this protein is NADH dehydrogenase [ubiquinone] 1 subunit C2.